The sequence spans 333 residues: Foldase protein PrsA (333 aa).

The signal sequence occupies residues 1–22 (MKKSTKLLAGIVTLASAMTLAA). Cysteine 23 is lipidated: N-palmitoyl cysteine. Residue cysteine 23 is the site of S-diacylglycerol cysteine attachment. The 96-residue stretch at 145–240 (TPEMTTQVTT…NKFYIVKVTK (96 aa)) folds into the PpiC domain. Positions 301–333 (DKKASKANTSKSDQKSSSDSSKDSQSSKSKSEK) are disordered. Residues 312–322 (SDQKSSSDSSK) show a composition bias toward basic and acidic residues. Over residues 323-333 (DSQSSKSKSEK) the composition is skewed to low complexity.

Belongs to the PrsA family.

The protein resides in the cell membrane. The enzyme catalyses [protein]-peptidylproline (omega=180) = [protein]-peptidylproline (omega=0). Plays a major role in protein secretion by helping the post-translocational extracellular folding of several secreted proteins. This Streptococcus equi subsp. equi (strain 4047) protein is Foldase protein PrsA.